A 1012-amino-acid polypeptide reads, in one-letter code: Multiple C2 domain and transmembrane region protein 10 (1012 aa).

The region spanning 1–115 (MTEAKTGTGN…REGESVVQLY (115 aa)) is the C2 1 domain. The interval 141-203 (ENGENVRRVN…SQQNGQGQRM (63 aa)) is disordered. Positions 148–160 (RVNRSGGSKKSKK) are enriched in basic residues. 2 stretches are compositionally biased toward low complexity: residues 161–180 (VQNV…QQQQ) and 188–202 (RGNQ…QGQR). 3 C2 domains span residues 262-376 (SSHK…PQWY), 411-551 (KAGN…SRWF), and 585-710 (YNSD…THSY). Residues glutamate 296, glutamate 344, asparagine 346, and glutamate 349 each coordinate Ca(2+). The next 3 helical transmembrane spans lie at 810–830 (FFRL…VEVM), 841–861 (VFVL…PCLL), and 952–972 (ATFL…TVPV).

This sequence belongs to the MCTP family. The cofactor is Ca(2+). In terms of tissue distribution, highly expressed in roots meristems, shoot apical meristems (SAMs) and in incipient leaf primordia. Observed in flowers.

It localises to the endoplasmic reticulum membrane. Functionally, may function as a signaling molecule by regulating the trafficking of other regulators. The sequence is that of Multiple C2 domain and transmembrane region protein 10 from Arabidopsis thaliana (Mouse-ear cress).